The sequence spans 142 residues: ATP synthase epsilon chain (142 aa).

The protein belongs to the ATPase epsilon chain family. As to quaternary structure, F-type ATPases have 2 components, CF(1) - the catalytic core - and CF(0) - the membrane proton channel. CF(1) has five subunits: alpha(3), beta(3), gamma(1), delta(1), epsilon(1). CF(0) has three main subunits: a, b and c.

The protein resides in the cell inner membrane. Produces ATP from ADP in the presence of a proton gradient across the membrane. In Coxiella burnetii (strain CbuK_Q154) (Coxiella burnetii (strain Q154)), this protein is ATP synthase epsilon chain.